The chain runs to 134 residues: UPF0102 protein Adeh_1910 (134 aa).

This sequence belongs to the UPF0102 family.

The sequence is that of UPF0102 protein Adeh_1910 from Anaeromyxobacter dehalogenans (strain 2CP-C).